Consider the following 580-residue polypeptide: Micronemal protein 4 (580 aa).

The first 25 residues, 1–25 (MRASLPVHLVVCTQLSAVWFGVAKA), serve as a signal peptide directing secretion. Apple domains lie at 68–137 (CVHS…SRSC), 141–214 (CFEQ…KQFC), 232–301 (CIQL…PKSC), 305–375 (CFSN…VTVG), 419–488 (CVHT…SRTC), and 492–565 (CLRR…YTFC). 15 cysteine pairs are disulfide-bonded: Cys68/Cys137, Cys93/Cys115, Cys97/Cys103, Cys141/Cys214, Cys166/Cys188, Cys170/Cys176, Cys232/Cys301, Cys257/Cys279, Cys261/Cys267, Cys305/Cys380, Cys332/Cys354, Cys336/Cys342, Cys419/Cys488, Cys444/Cys466, and Cys448/Cys454.

In terms of assembly, monomer. Part of the MIC6-MIC1-MIC4 complex. Interacts (via the second apple domain) directly with MIC1 (via the beta-finger region). Interacts with murine TLR2; the interaction promotes activation of bone marrow-derived dendritic cells and macrophages in the host. Interacts with murine TLR4; the interaction promotes activation of bone marrow-derived dendritic cells and macrophages in the host. In terms of processing, proteolytically cleaved at the N- and C-terminus after release from the microneme.

Its subcellular location is the cytoplasmic vesicle. It localises to the secretory vesicle. The protein resides in the microneme. The protein localises to the host early endosome. Its activity is regulated as follows. Lacto-N-biose inhibits binding to asialofetuin, a host glycoprotein. In terms of biological role, soluble adhesin with carbohydrate-binding activity. Binds to galactose-terminating oligosaccharides. Required for attachment of the parasite to the host cell prior to invasion. Triggers the activation of murine bone marrow-derived dendritic cells and macrophages and production of pro-inflammatory cytokines, such as IL12 (IL12B/IL12A), in host TLR2/TLR4-dependent manner. Triggers the production of anti-inflammatory cytokine IL10 in murine bone marrow-derived macrophages in host TLR4-dependent manner. Induces transient endotoxin tolerance in murine bone marrow-derived macrophages, manifested by reduced TNF-alpha (TNF) production in response to challenge with lipopolysaccharides (LPS). The sequence is that of Micronemal protein 4 from Toxoplasma gondii.